A 465-amino-acid chain; its full sequence is ATP synthase subunit beta (465 aa).

Position 148–155 (148–155) interacts with ATP; sequence GGAGVGKT.

Belongs to the ATPase alpha/beta chains family. F-type ATPases have 2 components, CF(1) - the catalytic core - and CF(0) - the membrane proton channel. CF(1) has five subunits: alpha(3), beta(3), gamma(1), delta(1), epsilon(1). CF(0) has three main subunits: a(1), b(2) and c(9-12). The alpha and beta chains form an alternating ring which encloses part of the gamma chain. CF(1) is attached to CF(0) by a central stalk formed by the gamma and epsilon chains, while a peripheral stalk is formed by the delta and b chains.

It localises to the cell inner membrane. The enzyme catalyses ATP + H2O + 4 H(+)(in) = ADP + phosphate + 5 H(+)(out). Functionally, produces ATP from ADP in the presence of a proton gradient across the membrane. The catalytic sites are hosted primarily by the beta subunits. The chain is ATP synthase subunit beta from Neisseria gonorrhoeae (strain ATCC 700825 / FA 1090).